We begin with the raw amino-acid sequence, 179 residues long: Dynein light chain Tctex-type 5 (179 aa).

It belongs to the dynein light chain Tctex-type family. Interacts with ZMYND10.

In Homo sapiens (Human), this protein is Dynein light chain Tctex-type 5 (DYNLT5).